A 198-amino-acid polypeptide reads, in one-letter code: Probable GTP-binding protein EngB (198 aa).

In terms of domain architecture, EngB-type G spans 36–198 (SDPQFAFIGR…NLSKLQELLE (163 aa)). GTP-binding positions include 44–51 (GRSNVGKS), 70–74 (GRTQL), 88–91 (DLPG), 155–158 (NKID), and 182–184 (ISA). Residues Ser-51 and Thr-72 each contribute to the Mg(2+) site.

It belongs to the TRAFAC class TrmE-Era-EngA-EngB-Septin-like GTPase superfamily. EngB GTPase family. The cofactor is Mg(2+).

Its function is as follows. Necessary for normal cell division and for the maintenance of normal septation. In Mesomycoplasma hyopneumoniae (strain 7448) (Mycoplasma hyopneumoniae), this protein is Probable GTP-binding protein EngB.